A 268-amino-acid polypeptide reads, in one-letter code: Cell division coordinator CpoB (268 aa).

Residues 1–21 form the signal peptide; the sequence is MRMCRRVVTVLALSLPLAAWA. Positions 58–94 form a coiled coil; it reads QLFMQLQQMQDQLSRQQGIIEELQNDVSRMKQENLER. The disordered stretch occupies residues 104-146; it reads SGAAPAATPDNSSGGGASNAAPDAAAGAAAQQPAGSSQPGDPA. The segment covering 121 to 143 has biased composition (low complexity); it reads SNAAPDAAAGAAAQQPAGSSQPG. TPR repeat units follow at residues 149–181, 185–218, and 222–255; these read KLYY…YPNS, GNAQ…YPKH, and PDSL…YPGT.

It belongs to the CpoB family.

Its subcellular location is the periplasm. Mediates coordination of peptidoglycan synthesis and outer membrane constriction during cell division. The sequence is that of Cell division coordinator CpoB from Pseudomonas putida (strain ATCC 47054 / DSM 6125 / CFBP 8728 / NCIMB 11950 / KT2440).